The following is a 456-amino-acid chain: 3-isopropylmalate dehydratase large subunit (456 aa).

3 residues coordinate [4Fe-4S] cluster: cysteine 336, cysteine 396, and cysteine 399.

This sequence belongs to the aconitase/IPM isomerase family. LeuC type 1 subfamily. In terms of assembly, heterodimer of LeuC and LeuD. [4Fe-4S] cluster is required as a cofactor.

The catalysed reaction is (2R,3S)-3-isopropylmalate = (2S)-2-isopropylmalate. The protein operates within amino-acid biosynthesis; L-leucine biosynthesis; L-leucine from 3-methyl-2-oxobutanoate: step 2/4. Catalyzes the isomerization between 2-isopropylmalate and 3-isopropylmalate, via the formation of 2-isopropylmaleate. This Staphylococcus epidermidis (strain ATCC 35984 / DSM 28319 / BCRC 17069 / CCUG 31568 / BM 3577 / RP62A) protein is 3-isopropylmalate dehydratase large subunit.